We begin with the raw amino-acid sequence, 668 residues long: UvrABC system protein C (668 aa).

A GIY-YIG domain is found at 14 to 91 (DSPGCYLHKD…IQRYKPKYNI (78 aa)). A UVR domain is found at 196–231 (KKIVNELEAKMMVSSDNMEFEQAAEYRDVIKAIGTL).

The protein belongs to the UvrC family. In terms of assembly, interacts with UvrB in an incision complex.

It localises to the cytoplasm. Its function is as follows. The UvrABC repair system catalyzes the recognition and processing of DNA lesions. UvrC both incises the 5' and 3' sides of the lesion. The N-terminal half is responsible for the 3' incision and the C-terminal half is responsible for the 5' incision. This Lactococcus lactis subsp. lactis (strain IL1403) (Streptococcus lactis) protein is UvrABC system protein C.